Consider the following 282-residue polypeptide: DegV domain-containing protein SPy_0865/M5005_Spy0672 (282 aa).

Residues 3 to 280 (LAVITDSTAT…EGAIAFGVTP (278 aa)) form the DegV domain. Hexadecanoate is bound by residues Thr-61 and Ser-94.

In terms of biological role, may bind long-chain fatty acids, such as palmitate, and may play a role in lipid transport or fatty acid metabolism. This Streptococcus pyogenes serotype M1 protein is DegV domain-containing protein SPy_0865/M5005_Spy0672.